We begin with the raw amino-acid sequence, 253 residues long: Ribosomal RNA small subunit methyltransferase J (253 aa).

S-adenosyl-L-methionine contacts are provided by residues 123-124 and D176; that span reads ER.

The protein belongs to the methyltransferase superfamily. RsmJ family.

It localises to the cytoplasm. It catalyses the reaction guanosine(1516) in 16S rRNA + S-adenosyl-L-methionine = N(2)-methylguanosine(1516) in 16S rRNA + S-adenosyl-L-homocysteine + H(+). Specifically methylates the guanosine in position 1516 of 16S rRNA. The chain is Ribosomal RNA small subunit methyltransferase J from Magnetococcus marinus (strain ATCC BAA-1437 / JCM 17883 / MC-1).